Consider the following 36-residue polypeptide: Defensin-like turtle egg white protein TEWP (36 aa).

At Gln-1 the chain carries Pyrrolidone carboxylic acid. Cystine bridges form between Cys-4-Cys-30, Cys-8-Cys-29, and Cys-12-Cys-24.

The protein belongs to the beta-defensin family. In terms of assembly, monomer. As to expression, detected in egg white (at protein level).

Its subcellular location is the secreted. Antibacterial and antiviral peptide. Has strong inhibitory activity towards E.coli and S.typhimurium. Has significant antiviral activity against Chandipura virus. This is Defensin-like turtle egg white protein TEWP from Caretta caretta (Loggerhead sea turtle).